We begin with the raw amino-acid sequence, 404 residues long: Pectate lyase E (404 aa).

An N-terminal signal peptide occupies residues 1–41 (MNNSRMSSVSTQKTTGRSALGTKSALAAIIATTMMVSVASA). 2 residues coordinate Ca(2+): aspartate 182 and aspartate 225. Residue arginine 278 is part of the active site.

The protein belongs to the polysaccharide lyase 1 family. PLBC subfamily. Ca(2+) is required as a cofactor.

It is found in the secreted. The enzyme catalyses Eliminative cleavage of (1-&gt;4)-alpha-D-galacturonan to give oligosaccharides with 4-deoxy-alpha-D-galact-4-enuronosyl groups at their non-reducing ends.. It participates in glycan metabolism; pectin degradation; 2-dehydro-3-deoxy-D-gluconate from pectin: step 2/5. Its function is as follows. Involved in maceration and soft-rotting of plant tissue. Pectate lyases have been implicated as pathogenicity factors which induce maceration or rotting of plant tissue. PelE is sufficient to induce these effects under laboratory conditions. This chain is Pectate lyase E (pelE), found in Dickeya chrysanthemi (Pectobacterium chrysanthemi).